The chain runs to 1339 residues: DNA-directed RNA polymerase subunit beta'' (1339 aa).

Zn(2+)-binding residues include Cys226, Cys299, Cys306, and Cys309.

The protein belongs to the RNA polymerase beta' chain family. RpoC2 subfamily. In plastids the minimal PEP RNA polymerase catalytic core is composed of four subunits: alpha, beta, beta', and beta''. When a (nuclear-encoded) sigma factor is associated with the core the holoenzyme is formed, which can initiate transcription. The cofactor is Zn(2+).

Its subcellular location is the plastid. It localises to the chloroplast. The catalysed reaction is RNA(n) + a ribonucleoside 5'-triphosphate = RNA(n+1) + diphosphate. Functionally, DNA-dependent RNA polymerase catalyzes the transcription of DNA into RNA using the four ribonucleoside triphosphates as substrates. The polypeptide is DNA-directed RNA polymerase subunit beta'' (Cycas taitungensis (Prince sago)).